Here is a 479-residue protein sequence, read N- to C-terminus: UDP-N-acetylmuramoyl-L-alanyl-D-glutamate--2,6-diaminopimelate ligase (479 aa).

Residue serine 21 participates in UDP-N-acetyl-alpha-D-muramoyl-L-alanyl-D-glutamate binding. Position 98 to 104 (98 to 104 (GTNGKSS)) interacts with ATP. UDP-N-acetyl-alpha-D-muramoyl-L-alanyl-D-glutamate-binding positions include 144-145 (TT), serine 171, glutamine 177, and arginine 179. N6-carboxylysine is present on lysine 211. Meso-2,6-diaminopimelate is bound by residues arginine 372, 396–399 (DNPR), glycine 446, and glutamate 450. The Meso-diaminopimelate recognition motif signature appears at 396 to 399 (DNPR).

It belongs to the MurCDEF family. MurE subfamily. Requires Mg(2+) as cofactor. Carboxylation is probably crucial for Mg(2+) binding and, consequently, for the gamma-phosphate positioning of ATP.

It localises to the cytoplasm. It carries out the reaction UDP-N-acetyl-alpha-D-muramoyl-L-alanyl-D-glutamate + meso-2,6-diaminopimelate + ATP = UDP-N-acetyl-alpha-D-muramoyl-L-alanyl-gamma-D-glutamyl-meso-2,6-diaminopimelate + ADP + phosphate + H(+). It participates in cell wall biogenesis; peptidoglycan biosynthesis. Its function is as follows. Catalyzes the addition of meso-diaminopimelic acid to the nucleotide precursor UDP-N-acetylmuramoyl-L-alanyl-D-glutamate (UMAG) in the biosynthesis of bacterial cell-wall peptidoglycan. In Rickettsia montanensis, this protein is UDP-N-acetylmuramoyl-L-alanyl-D-glutamate--2,6-diaminopimelate ligase.